A 350-amino-acid chain; its full sequence is Alcohol dehydrogenase (350 aa).

Cysteine 46 serves as a coordination point for Zn(2+). Residues histidine 47, threonine 48, and histidine 51 each contribute to the NAD(+) site. Positions 69, 100, 103, 106, 114, and 156 each coordinate Zn(2+). NAD(+)-binding residues include glycine 183, glycine 184, leucine 185, and aspartate 204. At threonine 205 the chain carries Phosphothreonine. NAD(+) contacts are provided by lysine 209 and phenylalanine 224. Threonine 250 bears the Phosphothreonine mark. Positions 271, 273, 296, 298, and 343 each coordinate NAD(+).

This sequence belongs to the zinc-containing alcohol dehydrogenase family. Homotetramer. Requires Zn(2+) as cofactor.

Its subcellular location is the cytoplasm. The enzyme catalyses a primary alcohol + NAD(+) = an aldehyde + NADH + H(+). The catalysed reaction is a secondary alcohol + NAD(+) = a ketone + NADH + H(+). It catalyses the reaction ethanol + NAD(+) = acetaldehyde + NADH + H(+). Its function is as follows. Reduces acetaldehyde to ethanol during the fermentation of glucose. This Schizosaccharomyces pombe (strain 972 / ATCC 24843) (Fission yeast) protein is Alcohol dehydrogenase (adh1).